The chain runs to 61 residues: uncharacterized protein (61 aa).

This is an uncharacterized protein from Treponema pallidum (strain Nichols).